The primary structure comprises 156 residues: Ribosomal RNA large subunit methyltransferase H (156 aa).

S-adenosyl-L-methionine contacts are provided by residues Leu73, Gly104, and 123–128 (LSPLTL).

This sequence belongs to the RNA methyltransferase RlmH family. Homodimer.

It is found in the cytoplasm. It carries out the reaction pseudouridine(1915) in 23S rRNA + S-adenosyl-L-methionine = N(3)-methylpseudouridine(1915) in 23S rRNA + S-adenosyl-L-homocysteine + H(+). Functionally, specifically methylates the pseudouridine at position 1915 (m3Psi1915) in 23S rRNA. This is Ribosomal RNA large subunit methyltransferase H from Photorhabdus laumondii subsp. laumondii (strain DSM 15139 / CIP 105565 / TT01) (Photorhabdus luminescens subsp. laumondii).